The chain runs to 251 residues: 5'-nucleotidase SurE (251 aa).

Residues D8, D9, S39, and N91 each coordinate a divalent metal cation.

This sequence belongs to the SurE nucleotidase family. A divalent metal cation serves as cofactor.

The protein localises to the cytoplasm. The catalysed reaction is a ribonucleoside 5'-phosphate + H2O = a ribonucleoside + phosphate. In terms of biological role, nucleotidase that shows phosphatase activity on nucleoside 5'-monophosphates. In Thioalkalivibrio sulfidiphilus (strain HL-EbGR7), this protein is 5'-nucleotidase SurE.